The primary structure comprises 238 residues: 3-dehydroquinate dehydratase (238 aa).

3-dehydroquinate-binding positions include 35 to 37 (ELR) and Arg-70. The active-site Proton donor/acceptor is the His-133. Catalysis depends on Lys-160, which acts as the Schiff-base intermediate with substrate. Arg-202 and Gln-225 together coordinate 3-dehydroquinate.

The protein belongs to the type-I 3-dehydroquinase family. Homodimer.

It catalyses the reaction 3-dehydroquinate = 3-dehydroshikimate + H2O. It functions in the pathway metabolic intermediate biosynthesis; chorismate biosynthesis; chorismate from D-erythrose 4-phosphate and phosphoenolpyruvate: step 3/7. Involved in the third step of the chorismate pathway, which leads to the biosynthesis of aromatic amino acids. Catalyzes the cis-dehydration of 3-dehydroquinate (DHQ) and introduces the first double bond of the aromatic ring to yield 3-dehydroshikimate. The polypeptide is 3-dehydroquinate dehydratase (Staphylococcus aureus (strain bovine RF122 / ET3-1)).